The primary structure comprises 1303 residues: DNA-directed RNA polymerase subunit beta' (1303 aa).

Zn(2+)-binding residues include Cys-60, Cys-62, Cys-75, and Cys-78. Mg(2+) contacts are provided by Asp-535, Asp-537, and Asp-539. Zn(2+) is bound by residues Cys-876, Cys-953, Cys-960, and Cys-963.

This sequence belongs to the RNA polymerase beta' chain family. The RNAP catalytic core consists of 2 alpha, 1 beta, 1 beta' and 1 omega subunit. When a sigma factor is associated with the core the holoenzyme is formed, which can initiate transcription. The cofactor is Mg(2+). It depends on Zn(2+) as a cofactor.

The enzyme catalyses RNA(n) + a ribonucleoside 5'-triphosphate = RNA(n+1) + diphosphate. DNA-dependent RNA polymerase catalyzes the transcription of DNA into RNA using the four ribonucleoside triphosphates as substrates. This is DNA-directed RNA polymerase subunit beta' from Saccharopolyspora erythraea (strain ATCC 11635 / DSM 40517 / JCM 4748 / NBRC 13426 / NCIMB 8594 / NRRL 2338).